The chain runs to 415 residues: Autophagy-related protein 19 (415 aa).

The interval 21 to 28 (YDECNKFQ) is ATG11-binding. The span at 126-135 (CREDAHEDPV) shows a compositional bias: basic and acidic residues. A disordered region spans residues 126–150 (CREDAHEDPVSPKAGSEEEISPNST). Serine 136 and serine 141 each carry phosphoserine. The stretch at 157-187 (RECLDNFMKQLLKLEESLNKLELEQKVTNKE) forms a coiled coil. Residues lysine 213 and lysine 216 each participate in a glycyl lysine isopeptide (Lys-Gly) (interchain with G-Cter in ubiquitin) cross-link. Serine 243 carries the post-translational modification Phosphoserine. Residues 254 to 367 (VEPPNERSLQ…LRPPSRLSAE (114 aa)) are AMS1-binding. The ATG8-binding stretch occupies residues 406–415 (NEKALTWEEL). The WXXL signature appears at 412 to 415 (WEEL).

In terms of assembly, interacts with the vacuolar aminopeptidase 1 (LAP4) precursor and mature forms. Also interacts with AMS1, APE4, ATG8 ATG11, and UBP3. In terms of processing, polyubiquitinated at Lys-213 and Lys-216. Deubiquitination by UBP3 is required for full activity of ATG19.

It is found in the preautophagosomal structure membrane. Cargo-receptor protein involved in the cytoplasm to vacuole transport (Cvt) and in autophagy. Recognizes cargo proteins, such as APE4, LAP3, LAP4 and AMS1 and delivers them to the pre-autophagosomal structure for eventual engulfment by the autophagosome and targeting to the vacuole. Involved in the organization of the preautophagosomal structure (PAS). ATG19 association with cargo protein is required to localize ATG11 to the PAS. Also involved in endoplasmic reticulum-specific autophagic process, in selective removal of ER-associated degradation (ERAD) substrates, and is essential for the survival of cells subjected to severe ER stress. Also plays a role in regulation of filamentous growth. This Saccharomyces cerevisiae (strain YJM789) (Baker's yeast) protein is Autophagy-related protein 19 (ATG19).